Here is a 427-residue protein sequence, read N- to C-terminus: Glutamate-1-semialdehyde 2,1-aminomutase (427 aa).

Lys-264 is modified (N6-(pyridoxal phosphate)lysine).

The protein belongs to the class-III pyridoxal-phosphate-dependent aminotransferase family. HemL subfamily. As to quaternary structure, homodimer. Requires pyridoxal 5'-phosphate as cofactor.

The protein resides in the cytoplasm. The enzyme catalyses (S)-4-amino-5-oxopentanoate = 5-aminolevulinate. The protein operates within porphyrin-containing compound metabolism; protoporphyrin-IX biosynthesis; 5-aminolevulinate from L-glutamyl-tRNA(Glu): step 2/2. The chain is Glutamate-1-semialdehyde 2,1-aminomutase from Campylobacter concisus (strain 13826).